The chain runs to 476 residues: Adenosylhomocysteinase (476 aa).

Substrate-binding residues include Thr67, Asp142, and Glu202. An NAD(+)-binding site is contributed by 203-205 (TTT). Lys232 and Asp236 together coordinate substrate. NAD(+) contacts are provided by residues Asn237, 266-271 (GYGDVG), Glu289, Asn324, 345-347 (IGH), and Asn390.

It belongs to the adenosylhomocysteinase family. NAD(+) serves as cofactor.

The protein resides in the cytoplasm. It catalyses the reaction S-adenosyl-L-homocysteine + H2O = L-homocysteine + adenosine. It participates in amino-acid biosynthesis; L-homocysteine biosynthesis; L-homocysteine from S-adenosyl-L-homocysteine: step 1/1. In terms of biological role, may play a key role in the regulation of the intracellular concentration of adenosylhomocysteine. This Synechococcus sp. (strain CC9311) protein is Adenosylhomocysteinase.